Reading from the N-terminus, the 459-residue chain is Bifunctional protein GlmU (459 aa).

Positions 1 to 229 are pyrophosphorylase; that stretch reads MSNFAIILAA…FDESLGVNDR (229 aa). UDP-N-acetyl-alpha-D-glucosamine-binding positions include 8 to 11, lysine 22, glutamine 72, and 77 to 78; these read LAAG and GT. Aspartate 102 lines the Mg(2+) pocket. Residues glycine 139, glutamate 154, asparagine 169, and asparagine 227 each coordinate UDP-N-acetyl-alpha-D-glucosamine. Asparagine 227 serves as a coordination point for Mg(2+). The interval 230 to 250 is linker; it reads VALATAESVMRRRINHKHMVN. An N-acetyltransferase region spans residues 251–459; sequence GVSFVNPEAT…TRLPHHPKNQ (209 aa). Residues arginine 332 and lysine 350 each coordinate UDP-N-acetyl-alpha-D-glucosamine. Catalysis depends on histidine 362, which acts as the Proton acceptor. UDP-N-acetyl-alpha-D-glucosamine is bound by residues tyrosine 365 and asparagine 376. Residues alanine 379, 385-386, serine 404, alanine 422, and arginine 439 each bind acetyl-CoA; that span reads NY.

It in the N-terminal section; belongs to the N-acetylglucosamine-1-phosphate uridyltransferase family. The protein in the C-terminal section; belongs to the transferase hexapeptide repeat family. In terms of assembly, homotrimer. The cofactor is Mg(2+).

The protein localises to the cytoplasm. It carries out the reaction alpha-D-glucosamine 1-phosphate + acetyl-CoA = N-acetyl-alpha-D-glucosamine 1-phosphate + CoA + H(+). It catalyses the reaction N-acetyl-alpha-D-glucosamine 1-phosphate + UTP + H(+) = UDP-N-acetyl-alpha-D-glucosamine + diphosphate. It participates in nucleotide-sugar biosynthesis; UDP-N-acetyl-alpha-D-glucosamine biosynthesis; N-acetyl-alpha-D-glucosamine 1-phosphate from alpha-D-glucosamine 6-phosphate (route II): step 2/2. It functions in the pathway nucleotide-sugar biosynthesis; UDP-N-acetyl-alpha-D-glucosamine biosynthesis; UDP-N-acetyl-alpha-D-glucosamine from N-acetyl-alpha-D-glucosamine 1-phosphate: step 1/1. The protein operates within bacterial outer membrane biogenesis; LPS lipid A biosynthesis. Catalyzes the last two sequential reactions in the de novo biosynthetic pathway for UDP-N-acetylglucosamine (UDP-GlcNAc). The C-terminal domain catalyzes the transfer of acetyl group from acetyl coenzyme A to glucosamine-1-phosphate (GlcN-1-P) to produce N-acetylglucosamine-1-phosphate (GlcNAc-1-P), which is converted into UDP-GlcNAc by the transfer of uridine 5-monophosphate (from uridine 5-triphosphate), a reaction catalyzed by the N-terminal domain. The sequence is that of Bifunctional protein GlmU from Streptococcus pneumoniae (strain Taiwan19F-14).